A 281-amino-acid chain; its full sequence is Nicotinamide/nicotinic acid mononucleotide adenylyltransferase 1 (281 aa).

Gly15 and Ser16 together coordinate beta-nicotinamide D-ribonucleotide. NAD(+) is bound by residues Gly15, Ser16, Phe17, and Met23. Position 15–17 (15–17 (GSF)) interacts with ATP. His24 is a binding site for ATP. Positions 55 and 57 each coordinate beta-nicotinamide D-ribonucleotide. Position 57 (Lys57) interacts with NAD(+). Lys58 contacts ATP. Beta-nicotinamide D-ribonucleotide contacts are provided by Trp92 and Thr95. Positions 92 and 95 each coordinate NAD(+). Positions 113–143 (PQQNSPVLEKPGRKRKWAEQKQDISEKKSLE) are disordered. Residue Ser117 is modified to Phosphoserine. The short motif at 123–129 (PGRKRKW) is the Nuclear localization signal element. Residues 129 to 143 (WAEQKQDISEKKSLE) show a composition bias toward basic and acidic residues. NAD(+)-binding residues include Gly158, Asp160, Leu170, Trp171, Glu217, and Asn221. An ATP-binding site is contributed by 158 to 160 (GAD). Leu170 and Trp171 together coordinate beta-nicotinamide D-ribonucleotide. An ATP-binding site is contributed by 226–229 (TKIR).

Belongs to the eukaryotic NMN adenylyltransferase family. Homohexamer. Interacts with ADPRT/PARP1. The cofactor is Zn(2+). Requires Mg(2+) as cofactor.

Its subcellular location is the nucleus. The enzyme catalyses beta-nicotinamide D-ribonucleotide + ATP + H(+) = diphosphate + NAD(+). It catalyses the reaction nicotinate beta-D-ribonucleotide + ATP + H(+) = deamido-NAD(+) + diphosphate. The protein operates within cofactor biosynthesis; NAD(+) biosynthesis; NAD(+) from nicotinamide D-ribonucleotide: step 1/1. Its pathway is cofactor biosynthesis; NAD(+) biosynthesis; deamido-NAD(+) from nicotinate D-ribonucleotide: step 1/1. Its activity is regulated as follows. Activity is strongly inhibited by galotannin. Inhibited by P1-(adenosine-5')-P4-(nicotinic-acid-riboside-5')-tetraphosphate (Nap4AD). Its function is as follows. Catalyzes the formation of NAD(+) from nicotinamide mononucleotide (NMN) and ATP. Can also use the deamidated form; nicotinic acid mononucleotide (NaMN) as substrate with the same efficiency. Can use triazofurin monophosphate (TrMP) as substrate. Also catalyzes the reverse reaction, i.e. the pyrophosphorolytic cleavage of NAD(+). For the pyrophosphorolytic activity, prefers NAD(+) and NaAD as substrates and degrades NADH, nicotinic acid adenine dinucleotide phosphate (NHD) and nicotinamide guanine dinucleotide (NGD) less effectively. Involved in the synthesis of ATP in the nucleus, together with PARP1, PARG and NUDT5. Nuclear ATP generation is required for extensive chromatin remodeling events that are energy-consuming. Fails to cleave phosphorylated dinucleotides NADP(+), NADPH and NaADP(+). Also acts as a cofactor for glutamate and aspartate ADP-ribosylation by directing PARP1 catalytic activity to glutamate and aspartate residues on histones. Protects against axonal degeneration following mechanical or toxic insults. Delays axonal degeneration after axotomy. Results in a &gt;10-fold increase in intact neurites 72 hours after injury. Neural protection does not correlate with cellular NAD(+) levels but may still require enzyme activity. In Bos taurus (Bovine), this protein is Nicotinamide/nicotinic acid mononucleotide adenylyltransferase 1 (NMNAT1).